Here is a 155-residue protein sequence, read N- to C-terminus: S-ribosylhomocysteine lyase (155 aa).

3 residues coordinate Fe cation: histidine 57, histidine 61, and cysteine 124.

This sequence belongs to the LuxS family. As to quaternary structure, homodimer. Fe cation is required as a cofactor.

It catalyses the reaction S-(5-deoxy-D-ribos-5-yl)-L-homocysteine = (S)-4,5-dihydroxypentane-2,3-dione + L-homocysteine. Its function is as follows. Involved in the synthesis of autoinducer 2 (AI-2) which is secreted by bacteria and is used to communicate both the cell density and the metabolic potential of the environment. The regulation of gene expression in response to changes in cell density is called quorum sensing. Catalyzes the transformation of S-ribosylhomocysteine (RHC) to homocysteine (HC) and 4,5-dihydroxy-2,3-pentadione (DPD). The chain is S-ribosylhomocysteine lyase from Listeria monocytogenes serovar 1/2a (strain ATCC BAA-679 / EGD-e).